The following is a 319-amino-acid chain: Acetyl-coenzyme A carboxylase carboxyl transferase subunit alpha (319 aa).

The 262-residue stretch at 34–295 folds into the CoA carboxyltransferase C-terminal domain; that stretch reads ELEEEVSKLK…KVRLKRDLAD (262 aa).

It belongs to the AccA family. Acetyl-CoA carboxylase is a heterohexamer composed of biotin carboxyl carrier protein (AccB), biotin carboxylase (AccC) and two subunits each of ACCase subunit alpha (AccA) and ACCase subunit beta (AccD).

It localises to the cytoplasm. It carries out the reaction N(6)-carboxybiotinyl-L-lysyl-[protein] + acetyl-CoA = N(6)-biotinyl-L-lysyl-[protein] + malonyl-CoA. It functions in the pathway lipid metabolism; malonyl-CoA biosynthesis; malonyl-CoA from acetyl-CoA: step 1/1. Functionally, component of the acetyl coenzyme A carboxylase (ACC) complex. First, biotin carboxylase catalyzes the carboxylation of biotin on its carrier protein (BCCP) and then the CO(2) group is transferred by the carboxyltransferase to acetyl-CoA to form malonyl-CoA. The chain is Acetyl-coenzyme A carboxylase carboxyl transferase subunit alpha from Pseudoalteromonas translucida (strain TAC 125).